A 169-amino-acid polypeptide reads, in one-letter code: Allophycocyanin subunit beta-18 (169 aa).

An N4-methylasparagine modification is found at asparagine 72. Cysteine 82 serves as a coordination point for (2R,3E)-phycocyanobilin.

Belongs to the phycobiliprotein family. In terms of assembly, heterodimer of an alpha and a beta chain. In terms of processing, contains one covalently linked bilin chromophore.

Its subcellular location is the plastid. The protein resides in the chloroplast thylakoid membrane. Its function is as follows. Light-harvesting photosynthetic bile pigment-protein from the phycobiliprotein complex. Allophycocyanin has a maximum absorption at approximately 650 nanometers. The protein is Allophycocyanin subunit beta-18 (apcF) of Pyropia yezoensis (Susabi-nori).